Consider the following 211-residue polypeptide: Histone H1-beta, late embryonic (211 aa).

Disordered stretches follow at residues 1–22 (MAAEQKKVAKKPRAKPAHPSSS) and 81–211 (KGAS…AAKK). The 75-residue stretch at 17 to 91 (AHPSSSEMVL…GASGSFKLGK (75 aa)) folds into the H15 domain. 2 stretches are compositionally biased toward basic and acidic residues: residues 95-107 (GKSDAQKAPDAAK) and 114-123 (KKKEAKEKKA). Composition is skewed to basic residues over residues 124–177 (ARSK…KKAA) and 185–211 (KAAKKPAAKKAAKKVAKKPAAKKAAKK).

This sequence belongs to the histone H1/H5 family.

Its subcellular location is the nucleus. It is found in the chromosome. Functionally, histones H1 are necessary for the condensation of nucleosome chains into higher-order structures. This chain is Histone H1-beta, late embryonic, found in Strongylocentrotus purpuratus (Purple sea urchin).